The chain runs to 101 residues: Ubiquitin-related modifier 1 (101 aa).

1-thioglycine is present on glycine 101. Residue glycine 101 forms a Glycyl lysine isopeptide (Gly-Lys) (interchain with K-? in acceptor proteins) linkage.

Belongs to the URM1 family. As to quaternary structure, component of a complex at least composed of URM1, CTU2/NCS2 and CTU1/ATPBD3. C-terminal thiocarboxylation occurs in 2 steps, it is first acyl-adenylated (-COAMP) via the hesA/moeB/thiF part of MOCS3, then thiocarboxylated (-COSH) via the rhodanese domain of MOCS3.

The protein localises to the cytoplasm. It functions in the pathway tRNA modification; 5-methoxycarbonylmethyl-2-thiouridine-tRNA biosynthesis. Acts as a sulfur carrier required for 2-thiolation of mcm(5)S(2)U at tRNA wobble positions of cytosolic tRNA(Lys), tRNA(Glu) and tRNA(Gln). Serves as sulfur donor in tRNA 2-thiolation reaction by being thiocarboxylated (-COSH) at its C-terminus by MOCS3. The sulfur is then transferred to tRNA to form 2-thiolation of mcm(5)S(2)U. Also acts as a ubiquitin-like protein (UBL) that is covalently conjugated via an isopeptide bond to lysine residues of target proteins such as MOCS3, ATPBD3, CTU2, USP15 and CAS. The thiocarboxylated form serves as substrate for conjugation and oxidative stress specifically induces the formation of UBL-protein conjugates. This is Ubiquitin-related modifier 1 from Bos taurus (Bovine).